The chain runs to 473 residues: Photosystem II CP43 reaction center protein (473 aa).

Positions 1–14 (MKTLYSPRRFYPVE) are excised as a propeptide. Position 15 is an N-acetylthreonine (threonine 15). Threonine 15 carries the post-translational modification Phosphothreonine. The next 5 helical transmembrane spans lie at 69-93 (LFEV…PHLA), 134-155 (LIGP…KDRN), 178-200 (KALF…RKIT), 255-275 (KPFA…LSYS), and 291-312 (WFNN…ASQA). Glutamate 367 contributes to the [CaMn4O5] cluster binding site. The chain crosses the membrane as a helical span at residues 447–471 (RARAAAAGFEKGIDRDLEPVLFMTP).

The protein belongs to the PsbB/PsbC family. PsbC subfamily. In terms of assembly, PSII is composed of 1 copy each of membrane proteins PsbA, PsbB, PsbC, PsbD, PsbE, PsbF, PsbH, PsbI, PsbJ, PsbK, PsbL, PsbM, PsbT, PsbX, PsbY, PsbZ, Psb30/Ycf12, at least 3 peripheral proteins of the oxygen-evolving complex and a large number of cofactors. It forms dimeric complexes. Binds multiple chlorophylls and provides some of the ligands for the Ca-4Mn-5O cluster of the oxygen-evolving complex. It may also provide a ligand for a Cl- that is required for oxygen evolution. PSII binds additional chlorophylls, carotenoids and specific lipids. is required as a cofactor.

The protein resides in the plastid. The protein localises to the chloroplast thylakoid membrane. One of the components of the core complex of photosystem II (PSII). It binds chlorophyll and helps catalyze the primary light-induced photochemical processes of PSII. PSII is a light-driven water:plastoquinone oxidoreductase, using light energy to abstract electrons from H(2)O, generating O(2) and a proton gradient subsequently used for ATP formation. This is Photosystem II CP43 reaction center protein from Welwitschia mirabilis (Tree tumbo).